Consider the following 510-residue polypeptide: Cytochrome P450 monooxygenase penQ (510 aa).

A helical membrane pass occupies residues 9–26 (WIVTLIVAATTYCTLRWV). 2 N-linked (GlcNAc...) asparagine glycosylation sites follow: Asn-148 and Asn-341. Heme is bound at residue Cys-448. Asn-482 carries an N-linked (GlcNAc...) asparagine glycan.

Belongs to the cytochrome P450 family. It depends on heme as a cofactor.

It localises to the membrane. Its pathway is secondary metabolite biosynthesis. Functionally, cytochrome P450 monooxygenase; part of the gene cluster that mediates the biosynthesis of the indole diterpenes penitrems. The geranylgeranyl diphosphate (GGPP) synthase penG catalyzes the first step in penitrem biosynthesis via conversion of farnesyl pyrophosphate and isopentyl pyrophosphate into geranylgeranyl pyrophosphate (GGPP). Condensation of indole-3-glycerol phosphate with GGPP by the prenyl transferase penC then forms 3-geranylgeranylindole (3-GGI). Epoxidation by the FAD-dependent monooxygenase penM leads to a epoxidized-GGI that is substrate of the terpene cyclase penB for cyclization to yield paspaline. Paspaline is subsequently converted to 13-desoxypaxilline by the cytochrome P450 monooxygenase penP, the latter being then converted to paxilline by the cytochrome P450 monooxygenase penQ. Paxilline is converted to beta-paxitriol via C-10 ketoreduction by the short-chain dehydrogenase PC-15 which can be monoprenylated at the C-20 by the indole diterpene prenyltransferase penD. A two-step elimination (acetylation and elimination) process performed by the O-acetyltransferase PC-16 and the P.simplicissimum ptmI-ortholog not yet identified in P.crustosum, leads to the production of the prenylated form of penijanthine. The FAD-linked oxidoreductase ptmO then converts the prenylated form of penijanthine into PC-M5 which is in turn transformed into PC-M4 by the aromatic dimethylallyltransferase PC-22. A series of oxidation steps involving 4 cytochrome P450 monooxygenases (PC-21, PC-05, PC-23, PC-20) and a FAD-dependent monooxygenase (PC-14) are required for the transformation of PC-M4 to penitrems A and E. Synthesis of these final products is proposed to proceed via penitrems D and C (PC-21, PC-05, PC-14) and penitrems B and F (PC-21, PC-05, PC-14, PC-23). The chain is Cytochrome P450 monooxygenase penQ from Penicillium crustosum (Blue mold fungus).